The sequence spans 283 residues: uncharacterized protein (283 aa).

Residue Tyr-55 is the Proton donor of the active site.

This sequence belongs to the aldo/keto reductase family.

It is found in the cytoplasm. The protein resides in the nucleus. This is an uncharacterized protein from Schizosaccharomyces pombe (strain 972 / ATCC 24843) (Fission yeast).